The chain runs to 308 residues: uncharacterized protein (308 aa).

2 stretches are compositionally biased toward polar residues: residues 138 to 148 and 205 to 229; these read WSFTKHGSNTP and STSH…QPPS. Disordered stretches follow at residues 138–157 and 205–235; these read WSFT…PLCN and STSH…TDAS.

Its subcellular location is the cytoplasm. This is an uncharacterized protein from Schizosaccharomyces pombe (strain 972 / ATCC 24843) (Fission yeast).